The primary structure comprises 231 residues: Large ribosomal subunit protein uL1 (231 aa).

Belongs to the universal ribosomal protein uL1 family. As to quaternary structure, part of the 50S ribosomal subunit.

In terms of biological role, binds directly to 23S rRNA. The L1 stalk is quite mobile in the ribosome, and is involved in E site tRNA release. Protein L1 is also a translational repressor protein, it controls the translation of the L11 operon by binding to its mRNA. The sequence is that of Large ribosomal subunit protein uL1 from Pseudomonas savastanoi pv. phaseolicola (strain 1448A / Race 6) (Pseudomonas syringae pv. phaseolicola (strain 1448A / Race 6)).